The primary structure comprises 454 residues: tRNA modification GTPase MnmE (454 aa).

Residues R23, E80, and K120 each contribute to the (6S)-5-formyl-5,6,7,8-tetrahydrofolate site. Residues 216–377 (TIKIVIAGPP…LKNKILEITT (162 aa)) form the TrmE-type G domain. A K(+)-binding site is contributed by N226. GTP contacts are provided by residues 226–231 (NVGKSS), 245–251 (TNIPGTT), and 270–273 (DTAG). S230 contributes to the Mg(2+) binding site. Residues T245, I247, and T250 each contribute to the K(+) site. Position 251 (T251) interacts with Mg(2+). (6S)-5-formyl-5,6,7,8-tetrahydrofolate is bound at residue K454.

This sequence belongs to the TRAFAC class TrmE-Era-EngA-EngB-Septin-like GTPase superfamily. TrmE GTPase family. As to quaternary structure, homodimer. Heterotetramer of two MnmE and two MnmG subunits. K(+) serves as cofactor.

Its subcellular location is the cytoplasm. Functionally, exhibits a very high intrinsic GTPase hydrolysis rate. Involved in the addition of a carboxymethylaminomethyl (cmnm) group at the wobble position (U34) of certain tRNAs, forming tRNA-cmnm(5)s(2)U34. This is tRNA modification GTPase MnmE from Buchnera aphidicola subsp. Cinara cedri (strain Cc).